The sequence spans 129 residues: NADH-quinone oxidoreductase subunit K 2 (129 aa).

3 consecutive transmembrane segments (helical) span residues L3–A23, I28–F48, and L68–V88. The disordered stretch occupies residues D98 to A129. Residues G111–A122 are compositionally biased toward low complexity.

This sequence belongs to the complex I subunit 4L family. In terms of assembly, NDH-1 is composed of 14 different subunits. Subunits NuoA, H, J, K, L, M, N constitute the membrane sector of the complex.

Its subcellular location is the cell membrane. It carries out the reaction a quinone + NADH + 5 H(+)(in) = a quinol + NAD(+) + 4 H(+)(out). NDH-1 shuttles electrons from NADH, via FMN and iron-sulfur (Fe-S) centers, to quinones in the respiratory chain. The immediate electron acceptor for the enzyme in this species is believed to be a menaquinone. Couples the redox reaction to proton translocation (for every two electrons transferred, four hydrogen ions are translocated across the cytoplasmic membrane), and thus conserves the redox energy in a proton gradient. The sequence is that of NADH-quinone oxidoreductase subunit K 2 from Streptomyces avermitilis (strain ATCC 31267 / DSM 46492 / JCM 5070 / NBRC 14893 / NCIMB 12804 / NRRL 8165 / MA-4680).